We begin with the raw amino-acid sequence, 230 residues long: Demethylmenaquinone methyltransferase (230 aa).

S-adenosyl-L-methionine is bound by residues Thr-62, Asp-80, 100–101, and Ser-117; that span reads DG.

Belongs to the class I-like SAM-binding methyltransferase superfamily. MenG/UbiE family.

The catalysed reaction is a 2-demethylmenaquinol + S-adenosyl-L-methionine = a menaquinol + S-adenosyl-L-homocysteine + H(+). It functions in the pathway quinol/quinone metabolism; menaquinone biosynthesis; menaquinol from 1,4-dihydroxy-2-naphthoate: step 2/2. Methyltransferase required for the conversion of demethylmenaquinol (DMKH2) to menaquinol (MKH2). The protein is Demethylmenaquinone methyltransferase of Corynebacterium urealyticum (strain ATCC 43042 / DSM 7109).